A 471-amino-acid chain; its full sequence is Glutamate--tRNA ligase 1 (471 aa).

The 'HIGH' region motif lies at 10-20 (PSPTGYLHIGG). The Zn(2+) site is built by C99, C101, C126, and D128. The 'KMSKS' region signature appears at 238 to 242 (RLSKR). K241 serves as a coordination point for ATP.

This sequence belongs to the class-I aminoacyl-tRNA synthetase family. Glutamate--tRNA ligase type 1 subfamily. In terms of assembly, monomer. It depends on Zn(2+) as a cofactor.

Its subcellular location is the cytoplasm. The catalysed reaction is tRNA(Glu) + L-glutamate + ATP = L-glutamyl-tRNA(Glu) + AMP + diphosphate. Catalyzes the attachment of glutamate to tRNA(Glu) in a two-step reaction: glutamate is first activated by ATP to form Glu-AMP and then transferred to the acceptor end of tRNA(Glu). In Alkalilimnicola ehrlichii (strain ATCC BAA-1101 / DSM 17681 / MLHE-1), this protein is Glutamate--tRNA ligase 1.